We begin with the raw amino-acid sequence, 397 residues long: Geranylgeranyl pyrophosphate synthase AN1592 (397 aa).

The tract at residues 1-67 is disordered; it reads MSPPLDSALE…SHDSSASSNI (67 aa). A compositionally biased stretch (basic and acidic residues) spans 13–42; the sequence is SEYKETAFPRTEKDPSQYKEHDLVTPEKEI. A compositionally biased stretch (low complexity) spans 52-67; that stretch reads SHSSHGSHDSSASSNI. The isopentenyl diphosphate site is built by Lys-120, Arg-123, and His-152. The Mg(2+) site is built by Asp-159 and Asp-163. Arg-168 is a dimethylallyl diphosphate binding site. Residue Arg-169 participates in isopentenyl diphosphate binding. Dimethylallyl diphosphate is bound by residues Lys-247, Thr-248, and Gln-281. Mg(2+) is bound at residue Asp-284. Dimethylallyl diphosphate contacts are provided by Asn-288, Lys-298, and Lys-308.

Belongs to the FPP/GGPP synthase family. Mg(2+) serves as cofactor.

It catalyses the reaction isopentenyl diphosphate + dimethylallyl diphosphate = (2E)-geranyl diphosphate + diphosphate. It carries out the reaction isopentenyl diphosphate + (2E)-geranyl diphosphate = (2E,6E)-farnesyl diphosphate + diphosphate. The catalysed reaction is isopentenyl diphosphate + (2E,6E)-farnesyl diphosphate = (2E,6E,10E)-geranylgeranyl diphosphate + diphosphate. It participates in secondary metabolite biosynthesis; terpenoid biosynthesis. Functionally, geranylgeranyl pyrophosphate synthase; part of the gene cluster that mediates the biosynthesis of the diterpene ent-pimara-8(14),15-diene (PD). Within the cluster, the HMG-CoA reductase AN1593 functions in the mevalonate pathway, which produces isoprenoid precursors. The geranylgeranyl pyrophosphate (GGPP) synthase AN1592 is needed in the formation of GGPP, the precursor for diterpenes. Lastly, the pimaradiene synthase pbcA performs the 2 cyclization steps that convert GGPP to ent-pimara-8(14),15-diene. The putative roles of the remaining cluster enzymes in ent-pimara-8(14),15-diene biosynthesis is unclear. The cytochrome P450 monooxygenase AN1598, the glutathione S-transferase AN1595, the oxidoreductases AN1596 and AN1597 probably function as decorative enzymes. It is possible that in biological conditions the compound is oxidized to ent-pimara-8(14),15-dien-19-oic acid, which is a bioactive diterpene compound predominant in many plant extracts. The protein is Geranylgeranyl pyrophosphate synthase AN1592 of Emericella nidulans (strain FGSC A4 / ATCC 38163 / CBS 112.46 / NRRL 194 / M139) (Aspergillus nidulans).